The sequence spans 645 residues: DNA ligase (645 aa).

Residues 30–34 (DAEFD) and 72–73 (SQ) contribute to the NAD(+) site. Residue Lys99 is the N6-AMP-lysine intermediate of the active site. NAD(+)-binding residues include Arg120, Glu163, Lys275, and Lys296. 4 residues coordinate Zn(2+): Cys387, Cys390, Cys403, and Cys408. Residues 564-645 (EEGAVLKGLS…EAFLNLIGKV (82 aa)) form the BRCT domain.

This sequence belongs to the NAD-dependent DNA ligase family. LigA subfamily. Mg(2+) serves as cofactor. It depends on Mn(2+) as a cofactor.

It catalyses the reaction NAD(+) + (deoxyribonucleotide)n-3'-hydroxyl + 5'-phospho-(deoxyribonucleotide)m = (deoxyribonucleotide)n+m + AMP + beta-nicotinamide D-nucleotide.. Its function is as follows. DNA ligase that catalyzes the formation of phosphodiester linkages between 5'-phosphoryl and 3'-hydroxyl groups in double-stranded DNA using NAD as a coenzyme and as the energy source for the reaction. It is essential for DNA replication and repair of damaged DNA. In Treponema denticola (strain ATCC 35405 / DSM 14222 / CIP 103919 / JCM 8153 / KCTC 15104), this protein is DNA ligase.